Reading from the N-terminus, the 209-residue chain is Large ribosomal subunit protein uL3 (209 aa).

Residues 133–153 (THGNSLSHRAPGSIGQNQTPG) form a disordered region. Position 150 is an N5-methylglutamine (glutamine 150).

This sequence belongs to the universal ribosomal protein uL3 family. In terms of assembly, part of the 50S ribosomal subunit. Forms a cluster with proteins L14 and L19. Post-translationally, methylated by PrmB.

In terms of biological role, one of the primary rRNA binding proteins, it binds directly near the 3'-end of the 23S rRNA, where it nucleates assembly of the 50S subunit. This Pectobacterium atrosepticum (strain SCRI 1043 / ATCC BAA-672) (Erwinia carotovora subsp. atroseptica) protein is Large ribosomal subunit protein uL3.